We begin with the raw amino-acid sequence, 360 residues long: DNA replication and repair protein RecF (360 aa).

33 to 40 (GENGSGKT) contributes to the ATP binding site.

This sequence belongs to the RecF family.

The protein localises to the cytoplasm. Its function is as follows. The RecF protein is involved in DNA metabolism; it is required for DNA replication and normal SOS inducibility. RecF binds preferentially to single-stranded, linear DNA. It also seems to bind ATP. The chain is DNA replication and repair protein RecF from Rickettsia massiliae (strain Mtu5).